A 159-amino-acid polypeptide reads, in one-letter code: Endoribonuclease YbeY (159 aa).

Residues His125, His129, and His135 each coordinate Zn(2+).

The protein belongs to the endoribonuclease YbeY family. The cofactor is Zn(2+).

Its subcellular location is the cytoplasm. Single strand-specific metallo-endoribonuclease involved in late-stage 70S ribosome quality control and in maturation of the 3' terminus of the 16S rRNA. This Lactiplantibacillus plantarum (strain ATCC BAA-793 / NCIMB 8826 / WCFS1) (Lactobacillus plantarum) protein is Endoribonuclease YbeY.